A 312-amino-acid chain; its full sequence is Holliday junction branch migration complex subunit RuvB (312 aa).

The segment at 1 to 168 (MKTNNEFRPQ…FGHVFYLSEY (168 aa)) is large ATPase domain (RuvB-L). Residues arginine 8, glycine 49, lysine 52, threonine 53, threonine 54, 115-117 (EDF), arginine 158, tyrosine 168, and arginine 206 each bind ATP. A Mg(2+)-binding site is contributed by threonine 53. Positions 169–234 (ETSEIAAIIL…NIKNIFEKIQ (66 aa)) are small ATPAse domain (RuvB-S). The segment at 237–312 (DFGLEEQDIN…EFLKNNQLIK (76 aa)) is head domain (RuvB-H). DNA is bound by residues lysine 290 and arginine 295.

The protein belongs to the RuvB family. Homohexamer. Forms an RuvA(8)-RuvB(12)-Holliday junction (HJ) complex. HJ DNA is sandwiched between 2 RuvA tetramers; dsDNA enters through RuvA and exits via RuvB. An RuvB hexamer assembles on each DNA strand where it exits the tetramer. Each RuvB hexamer is contacted by two RuvA subunits (via domain III) on 2 adjacent RuvB subunits; this complex drives branch migration. In the full resolvosome a probable DNA-RuvA(4)-RuvB(12)-RuvC(2) complex forms which resolves the HJ.

The protein localises to the cytoplasm. It carries out the reaction ATP + H2O = ADP + phosphate + H(+). In terms of biological role, the RuvA-RuvB-RuvC complex processes Holliday junction (HJ) DNA during genetic recombination and DNA repair, while the RuvA-RuvB complex plays an important role in the rescue of blocked DNA replication forks via replication fork reversal (RFR). RuvA specifically binds to HJ cruciform DNA, conferring on it an open structure. The RuvB hexamer acts as an ATP-dependent pump, pulling dsDNA into and through the RuvAB complex. RuvB forms 2 homohexamers on either side of HJ DNA bound by 1 or 2 RuvA tetramers; 4 subunits per hexamer contact DNA at a time. Coordinated motions by a converter formed by DNA-disengaged RuvB subunits stimulates ATP hydrolysis and nucleotide exchange. Immobilization of the converter enables RuvB to convert the ATP-contained energy into a lever motion, pulling 2 nucleotides of DNA out of the RuvA tetramer per ATP hydrolyzed, thus driving DNA branch migration. The RuvB motors rotate together with the DNA substrate, which together with the progressing nucleotide cycle form the mechanistic basis for DNA recombination by continuous HJ branch migration. Branch migration allows RuvC to scan DNA until it finds its consensus sequence, where it cleaves and resolves cruciform DNA. The chain is Holliday junction branch migration complex subunit RuvB from Ureaplasma urealyticum serovar 10 (strain ATCC 33699 / Western).